Reading from the N-terminus, the 949-residue chain is L-fucokinase/L-fucose-1-P guanylyltransferase (949 aa).

Residues 25–191 (DWFCTSDPVG…DFMLQKPSLA (167 aa)) are fucose-1-phosphate guanylyltransferase. An L-fucokinase region spans residues 559 to 949 (LLRDGLLDGI…SDKGFQVSRS (391 aa)).

This sequence belongs to the GHMP kinase family. Homotetramer. The cofactor is Mn(2+). Mg(2+) serves as cofactor.

The enzyme catalyses L-fucose + ATP = beta-L-fucose 1-phosphate + ADP + H(+). It catalyses the reaction beta-L-fucose 1-phosphate + GTP + H(+) = GDP-beta-L-fucose + diphosphate. Its function is as follows. Bifunctional enzyme involved in the salvage pathway of GDP-fucose synthesis. Catalyzes two successive reactions, the ATP-dependent phosphorylation of L-fucose to L-fucose 1-phosphate, and its guanylylation to GDP-L-fucose. GDP-fucose is an important fucose donor in the process of fucosylated oligosaccharides formation. The protein is L-fucokinase/L-fucose-1-P guanylyltransferase of Bacteroides fragilis.